A 512-amino-acid polypeptide reads, in one-letter code: Cobyric acid synthase (512 aa).

A GATase cobBQ-type domain is found at 254-455 (EIDIAVVKLP…LHGLFDNKAL (202 aa)). Cys-335 functions as the Nucleophile in the catalytic mechanism. Residue His-447 is part of the active site.

Belongs to the CobB/CobQ family. CobQ subfamily.

The protein operates within cofactor biosynthesis; adenosylcobalamin biosynthesis. In terms of biological role, catalyzes amidations at positions B, D, E, and G on adenosylcobyrinic A,C-diamide. NH(2) groups are provided by glutamine, and one molecule of ATP is hydrogenolyzed for each amidation. The sequence is that of Cobyric acid synthase from Desulforamulus reducens (strain ATCC BAA-1160 / DSM 100696 / MI-1) (Desulfotomaculum reducens).